Reading from the N-terminus, the 334-residue chain is Phosphoribosylformylglycinamidine cyclo-ligase (334 aa).

This sequence belongs to the AIR synthase family.

It localises to the cytoplasm. It catalyses the reaction 2-formamido-N(1)-(5-O-phospho-beta-D-ribosyl)acetamidine + ATP = 5-amino-1-(5-phospho-beta-D-ribosyl)imidazole + ADP + phosphate + H(+). It functions in the pathway purine metabolism; IMP biosynthesis via de novo pathway; 5-amino-1-(5-phospho-D-ribosyl)imidazole from N(2)-formyl-N(1)-(5-phospho-D-ribosyl)glycinamide: step 2/2. The protein is Phosphoribosylformylglycinamidine cyclo-ligase of Thermococcus kodakarensis (strain ATCC BAA-918 / JCM 12380 / KOD1) (Pyrococcus kodakaraensis (strain KOD1)).